A 192-amino-acid chain; its full sequence is Orotate phosphoribosyltransferase (192 aa).

116-124 (EDIVTTGLS) is a 5-phospho-alpha-D-ribose 1-diphosphate binding site. Orotate-binding residues include threonine 120 and arginine 148.

This sequence belongs to the purine/pyrimidine phosphoribosyltransferase family. PyrE subfamily. As to quaternary structure, homodimer. Mg(2+) serves as cofactor.

The catalysed reaction is orotidine 5'-phosphate + diphosphate = orotate + 5-phospho-alpha-D-ribose 1-diphosphate. The protein operates within pyrimidine metabolism; UMP biosynthesis via de novo pathway; UMP from orotate: step 1/2. Functionally, catalyzes the transfer of a ribosyl phosphate group from 5-phosphoribose 1-diphosphate to orotate, leading to the formation of orotidine monophosphate (OMP). In Bartonella quintana (strain Toulouse) (Rochalimaea quintana), this protein is Orotate phosphoribosyltransferase.